A 455-amino-acid chain; its full sequence is MRSEWVARRRGQANVTQMHFARQGVITEEMDYVARRENLPPELIRSEVARGRMIIPANINHTNLEPMCIGIASRCKVNANIGASPSSSGLAEELEKLKLAIKYGADTVMDLSTGGGDLDEIRTAIIQASPVPIGTVPIYQALESVHGNVEKLSAEDILHIIEKQAQQGVDYMTIHAGILIEYLPLVRNRLTGIVSRGGGILARWMLAHHKQNPLYTHFRDIIEIFKKYDVSFSLGDALRPGCLHDASDEAQMAELKTLGQLTRMAWEHDVQVMVEGPGHVPMDQIEFNVRKQMEECDEAPFYVLGPLVTDIAAGYDHISSAIGAALAGWYGAAMLCYVTPKEHLGLPNAEDVRNGLIAYKIAAHAADIARHRPGARDRDDEMSRARYNFDWNRQFELSLDPERAREYHDETLPADIYKTAEFCSMCGPKFCPMQTKMDAEALSELERFLAKQPTA.

Substrate contacts are provided by residues Asn80, Met109, Tyr139, His175, 195–197 (SRG), 236–239 (DALR), and Glu275. Residue His279 participates in Zn(2+) binding. Tyr302 serves as a coordination point for substrate. Residue His343 coordinates Zn(2+). [4Fe-4S] cluster is bound by residues Cys423, Cys426, and Cys431.

The protein belongs to the ThiC family. It depends on [4Fe-4S] cluster as a cofactor.

It carries out the reaction 5-amino-1-(5-phospho-beta-D-ribosyl)imidazole + S-adenosyl-L-methionine = 4-amino-2-methyl-5-(phosphooxymethyl)pyrimidine + CO + 5'-deoxyadenosine + formate + L-methionine + 3 H(+). The protein operates within cofactor biosynthesis; thiamine diphosphate biosynthesis. Its function is as follows. Catalyzes the synthesis of the hydroxymethylpyrimidine phosphate (HMP-P) moiety of thiamine from aminoimidazole ribotide (AIR) in a radical S-adenosyl-L-methionine (SAM)-dependent reaction. The protein is Phosphomethylpyrimidine synthase of Synechococcus sp. (strain JA-3-3Ab) (Cyanobacteria bacterium Yellowstone A-Prime).